Here is a 1254-residue protein sequence, read N- to C-terminus: SUN domain-containing ossification factor (1254 aa).

Residues M1–C29 form the signal peptide. Disordered regions lie at residues K58–K88, E118–T270, and E282–Q304. Residues V130 to S145 show a composition bias toward low complexity. The segment covering E165–E175 has biased composition (acidic residues). Residues N202 and N236 are each glycosylated (N-linked (GlcNAc...) asparagine). The segment covering L241–D253 has biased composition (basic and acidic residues). Residues E284–M453 form the SUN domain. The span at S288–S297 shows a compositional bias: polar residues. An N-linked (GlcNAc...) asparagine glycan is attached at N524. Disordered regions lie at residues N530 to E553, E583 to S605, and H759 to E788. Residues P540–E553 show a composition bias toward low complexity. The stretch at N909 to D1009 forms a coiled coil. 2 N-linked (GlcNAc...) asparagine glycosylation sites follow: N928 and N955. Residues Q1011–Q1031 form a helical membrane-spanning segment. Residue S1081 is modified to Phosphoserine. Positions E1152–Q1172 are disordered. The span at S1163–Q1172 shows a compositional bias: low complexity.

O-glycosylated. O-mannosylated by POMT1 and POMT2 and elongated by POMGNT1. Post-translationally, N-glycosylated. As to expression, highly expressed in pancreas and testis and to a lower extent in prostate, ovary, heart, thymus, small intestine and spleen.

The protein resides in the rough endoplasmic reticulum membrane. Its function is as follows. Required for bone modeling during late embryogenesis. Regulates type I collagen synthesis in osteoblasts during their postnatal maturation. This chain is SUN domain-containing ossification factor (SUCO), found in Homo sapiens (Human).